The primary structure comprises 200 residues: Potassium-transporting ATPase KdpC subunit (200 aa).

The chain crosses the membrane as a helical span at residues 9-31 (LVMLVALTALTGLVYPLAMTGVA). Positions 68–97 (GRPSATTAPDPQDSSKTVPSPYNAANSMGA) are disordered. Positions 71 to 96 (SATTAPDPQDSSKTVPSPYNAANSMG) are enriched in polar residues.

The protein belongs to the KdpC family. The system is composed of three essential subunits: KdpA, KdpB and KdpC.

The protein localises to the cell inner membrane. Its function is as follows. Part of the high-affinity ATP-driven potassium transport (or Kdp) system, which catalyzes the hydrolysis of ATP coupled with the electrogenic transport of potassium into the cytoplasm. This subunit acts as a catalytic chaperone that increases the ATP-binding affinity of the ATP-hydrolyzing subunit KdpB by the formation of a transient KdpB/KdpC/ATP ternary complex. The sequence is that of Potassium-transporting ATPase KdpC subunit from Rhodopseudomonas palustris (strain BisA53).